The chain runs to 712 residues: Aryl hydrocarbon receptor nuclear translocator 2 (712 aa).

Disordered regions lie at residues 1–20 and 35–74; these read MATP…PGSV and MAGA…IERR. Arg42 carries the omega-N-methylarginine modification. The span at 63-73 shows a compositional bias: basic and acidic residues; the sequence is FSRENHSEIER. The bHLH domain occupies 63–116; sequence FSRENHSEIERRRRNKMTQYITELSDMVPTCSALARKPDKLTILRMAVSHMKSM. PAS domains lie at 134-209 and 323-393; these read TEQE…MTGR and PVCM…VKLK. One can recognise a PAC domain in the interval 398-441; that stretch reads SVMYRFRTKNREWLLIRTSSFTFQNPYSDEIEYVICTNTNVKQL. Positions 573 to 712 are disordered; the sequence is AWTGSRPPFP…DLGMFPPFSE (140 aa). Low complexity-rich tracts occupy residues 597 to 626 and 653 to 675; these read SSHP…AYPS and SQWQ…QPGQ.

In terms of assembly, efficient DNA binding requires dimerization with another bHLH protein. Heterodimer with NPAS4 or SIM1. Heterodimer with the aryl hydrocarbon receptor (AHR) or the SIM1 protein. Interacts with TACC3.

It is found in the nucleus. Its function is as follows. Transcription factor that plays a role in the development of the hypothalamo-pituitary axis, postnatal brain growth, and visual and renal function. Specifically recognizes the xenobiotic response element (XRE). This is Aryl hydrocarbon receptor nuclear translocator 2 (Arnt2) from Rattus norvegicus (Rat).